Reading from the N-terminus, the 176-residue chain is MKIIAKKDLFINDEIRVREVRLVGLEGEQLGIKPLSEAQSLADASNVDLVLIQPQAVPPVAKLMDYGKFKFEYQKKQKEQRKKQSVVTVKEVRLSPVIDKGDFETKLRNGRKFLEKGNKVKVSIRFKGRMITHKEIGAKVLADFAEATQDIAIIEQRAKMDGRQMFMQLAPISDNK.

This sequence belongs to the IF-3 family. Monomer.

Its subcellular location is the cytoplasm. In terms of biological role, IF-3 binds to the 30S ribosomal subunit and shifts the equilibrium between 70S ribosomes and their 50S and 30S subunits in favor of the free subunits, thus enhancing the availability of 30S subunits on which protein synthesis initiation begins. This is Translation initiation factor IF-3 from Streptococcus pyogenes serotype M4 (strain MGAS10750).